A 57-amino-acid polypeptide reads, in one-letter code: MPFTASDICKILFAIILPPLGVFLERGCGADLLINICLTILGWIPGIIHAFYIIFKY.

The chain crosses the membrane as a helical span at residues 34-54 (INICLTILGWIPGIIHAFYII).

The protein belongs to the UPF0057 (PMP3) family.

Its subcellular location is the cell membrane. Its function is as follows. Plays a role in the regulation of membrane potential. Could mediate a proton leak. This is Plasma membrane proteolipid 3 (pmp3) from Aspergillus fumigatus (strain ATCC MYA-4609 / CBS 101355 / FGSC A1100 / Af293) (Neosartorya fumigata).